The chain runs to 457 residues: Bifunctional protein GlmU (457 aa).

Positions 1 to 227 (MTQLSVVILA…FMEVEGANNR (227 aa)) are pyrophosphorylase. Residues 9–12 (LAAG), lysine 23, glutamine 74, 79–80 (GT), 101–103 (YGD), glycine 138, glutamate 152, asparagine 167, and asparagine 225 contribute to the UDP-N-acetyl-alpha-D-glucosamine site. Aspartate 103 provides a ligand contact to Mg(2+). Mg(2+) is bound at residue asparagine 225. The linker stretch occupies residues 228–248 (LQLAALERFYQKTQAEKLLLA). An N-acetyltransferase region spans residues 249–457 (GVRLIDPARF…QRPTKKKIAD (209 aa)). UDP-N-acetyl-alpha-D-glucosamine-binding residues include arginine 331 and lysine 349. The Proton acceptor role is filled by histidine 361. UDP-N-acetyl-alpha-D-glucosamine contacts are provided by tyrosine 364 and asparagine 375. Acetyl-CoA contacts are provided by residues alanine 378, 384–385 (NY), serine 403, alanine 421, and arginine 438.

In the N-terminal section; belongs to the N-acetylglucosamine-1-phosphate uridyltransferase family. The protein in the C-terminal section; belongs to the transferase hexapeptide repeat family. As to quaternary structure, homotrimer. The cofactor is Mg(2+).

The protein resides in the cytoplasm. It carries out the reaction alpha-D-glucosamine 1-phosphate + acetyl-CoA = N-acetyl-alpha-D-glucosamine 1-phosphate + CoA + H(+). The catalysed reaction is N-acetyl-alpha-D-glucosamine 1-phosphate + UTP + H(+) = UDP-N-acetyl-alpha-D-glucosamine + diphosphate. Its pathway is nucleotide-sugar biosynthesis; UDP-N-acetyl-alpha-D-glucosamine biosynthesis; N-acetyl-alpha-D-glucosamine 1-phosphate from alpha-D-glucosamine 6-phosphate (route II): step 2/2. It functions in the pathway nucleotide-sugar biosynthesis; UDP-N-acetyl-alpha-D-glucosamine biosynthesis; UDP-N-acetyl-alpha-D-glucosamine from N-acetyl-alpha-D-glucosamine 1-phosphate: step 1/1. The protein operates within bacterial outer membrane biogenesis; LPS lipid A biosynthesis. In terms of biological role, catalyzes the last two sequential reactions in the de novo biosynthetic pathway for UDP-N-acetylglucosamine (UDP-GlcNAc). The C-terminal domain catalyzes the transfer of acetyl group from acetyl coenzyme A to glucosamine-1-phosphate (GlcN-1-P) to produce N-acetylglucosamine-1-phosphate (GlcNAc-1-P), which is converted into UDP-GlcNAc by the transfer of uridine 5-monophosphate (from uridine 5-triphosphate), a reaction catalyzed by the N-terminal domain. The sequence is that of Bifunctional protein GlmU from Actinobacillus pleuropneumoniae serotype 5b (strain L20).